The sequence spans 215 residues: MTQSLADMRREYTRDGLSEANAPSDPFSLFRQWFDDAVKTERLPVEPNAMTLATVDADGHPHCRILLLKGLDERGFTFFTNYESAKGRQLAANPRAAMTFFWPALERQVRIEGEIEKVTAQESDAYYQVRPLGSRLGAWASPQSRVIADRAELERLLAETERRFADQAPSCPEHWGGYRLLPQRIEFWQGRPSRLHDRLDYRHQDGVWARERLAP.

Substrate contacts are provided by residues 9 to 12 (RREY) and K69. Residues 64 to 69 (RILLLK), 79 to 80 (FT), K86, and Q108 each bind FMN. Residues Y126, R130, and S134 each contribute to the substrate site. FMN contacts are provided by residues 143 to 144 (QS) and W188. 194–196 (RLH) is a substrate binding site. FMN is bound at residue R198.

Belongs to the pyridoxamine 5'-phosphate oxidase family. In terms of assembly, homodimer. FMN is required as a cofactor.

The enzyme catalyses pyridoxamine 5'-phosphate + O2 + H2O = pyridoxal 5'-phosphate + H2O2 + NH4(+). It carries out the reaction pyridoxine 5'-phosphate + O2 = pyridoxal 5'-phosphate + H2O2. The protein operates within cofactor metabolism; pyridoxal 5'-phosphate salvage; pyridoxal 5'-phosphate from pyridoxamine 5'-phosphate: step 1/1. It participates in cofactor metabolism; pyridoxal 5'-phosphate salvage; pyridoxal 5'-phosphate from pyridoxine 5'-phosphate: step 1/1. In terms of biological role, catalyzes the oxidation of either pyridoxine 5'-phosphate (PNP) or pyridoxamine 5'-phosphate (PMP) into pyridoxal 5'-phosphate (PLP). The polypeptide is Pyridoxine/pyridoxamine 5'-phosphate oxidase (Pseudomonas paraeruginosa (strain DSM 24068 / PA7) (Pseudomonas aeruginosa (strain PA7))).